Reading from the N-terminus, the 123-residue chain is MPTINQLVRSPRKSRALLNKAPALQHNPQKRAVCVKVYTTTPRKPNSALRKVARVKIAGYGSEVIAYIPGEGHNLQEHSVVLIRGGRVKDLPGVRYHIIRGALDSRGVQNRKKARSKYGVKKS.

Asp-90 bears the 3-methylthioaspartic acid mark.

It belongs to the universal ribosomal protein uS12 family. Part of the 30S ribosomal subunit. Contacts proteins S8 and S17. May interact with IF1 in the 30S initiation complex.

Functionally, with S4 and S5 plays an important role in translational accuracy. In terms of biological role, interacts with and stabilizes bases of the 16S rRNA that are involved in tRNA selection in the A site and with the mRNA backbone. Located at the interface of the 30S and 50S subunits, it traverses the body of the 30S subunit contacting proteins on the other side and probably holding the rRNA structure together. The combined cluster of proteins S8, S12 and S17 appears to hold together the shoulder and platform of the 30S subunit. This chain is Small ribosomal subunit protein uS12, found in Ehrlichia ruminantium (strain Gardel).